A 354-amino-acid polypeptide reads, in one-letter code: MAFPLQKTFLCSNGQSFPCSNGRSTSTLLASDLKFQRLNKPFILRVGSMQIRNSPKEHPRVSSAAVLPPVPRSIHDIPNGDHILGFGANLAEDHPGYHDEEYKRRRSCIADLAKKHKIGEPIPEINYTTEEAHVWAEVLTKLSELYPSHACKEYLESFPLFNFSPNKIPQLEELSQILQHYTGWKIRPVAGLLHPRQFLNGLAFKTFHSTQYIRHTSNPMYTPEPDICHEILGHMPMLVHPEFADLAQVIGLASLGASDKEIWHLTKLYWYTVEFGTIEENKEVKAFGAGILSSFGELQHMKSSKPTFQKLDPFAQLPKMSYKDGFQNMYFLCQSFSDTTEKLRSYARTIHSGN.

Residues 1-60 constitute a chloroplast transit peptide; that stretch reads MAFPLQKTFLCSNGQSFPCSNGRSTSTLLASDLKFQRLNKPFILRVGSMQIRNSPKEHPR. Fe cation-binding residues include H229, H234, and E274.

Belongs to the biopterin-dependent aromatic amino acid hydroxylase family. Forms monomers. The cofactor is Fe(2+).

It is found in the plastid. Its subcellular location is the chloroplast. The enzyme catalyses (6R)-L-erythro-5,6,7,8-tetrahydrobiopterin + L-phenylalanine + O2 = (4aS,6R)-4a-hydroxy-L-erythro-5,6,7,8-tetrahydrobiopterin + L-tyrosine. Catalyzes the hydroxylation of L-phenylalanine to L-tyrosine. Does not seem to be tetrahydropterin-dependent and shows preference for 10-formyltetrahydrofolate as cosubstrate and electron donor. This chain is Phenylalanine 4-monooxygenase, chloroplastic, found in Pinus taeda (Loblolly pine).